The following is an 874-amino-acid chain: Alanine--tRNA ligase (874 aa).

Positions 562, 566, 665, and 669 each coordinate Zn(2+).

This sequence belongs to the class-II aminoacyl-tRNA synthetase family. It depends on Zn(2+) as a cofactor.

The protein resides in the cytoplasm. The catalysed reaction is tRNA(Ala) + L-alanine + ATP = L-alanyl-tRNA(Ala) + AMP + diphosphate. In terms of biological role, catalyzes the attachment of alanine to tRNA(Ala) in a two-step reaction: alanine is first activated by ATP to form Ala-AMP and then transferred to the acceptor end of tRNA(Ala). Also edits incorrectly charged Ser-tRNA(Ala) and Gly-tRNA(Ala) via its editing domain. The protein is Alanine--tRNA ligase of Pseudomonas fluorescens (strain ATCC BAA-477 / NRRL B-23932 / Pf-5).